Consider the following 299-residue polypeptide: HTH-type transcriptional regulator PgrR (299 aa).

The HTH lysR-type domain occupies 4 to 61 (EEIADLMAFVVVAEERSFTRAAARLSMAQSALSQIVRRIEERLGLRLLTRTTRSVVPT). Residues 21–40 (FTRAAARLSMAQSALSQIVR) constitute a DNA-binding region (H-T-H motif).

Belongs to the LysR transcriptional regulatory family.

In terms of biological role, regulates the expression of genes involved in peptidoglycan (PG) degradation. Could play a role in switch control between recycling and degradation of PG peptides. Negatively regulates the expression of the ycjY-ymjD-ymjC-mpaA operon by binding to the PgrR-box. In addition, other genes are predicted to be under the control of PgrR, including genes related to membrane formation and function. The polypeptide is HTH-type transcriptional regulator PgrR (pgrR) (Escherichia coli (strain K12)).